Here is a 97-residue protein sequence, read N- to C-terminus: Integration host factor subunit alpha (97 aa).

Residues 49–71 (FGNFDLRDKNQRPGRNPKTGEDI) form a disordered region.

It belongs to the bacterial histone-like protein family. In terms of assembly, heterodimer of an alpha and a beta chain.

This protein is one of the two subunits of integration host factor, a specific DNA-binding protein that functions in genetic recombination as well as in transcriptional and translational control. The polypeptide is Integration host factor subunit alpha (Shewanella woodyi (strain ATCC 51908 / MS32)).